The sequence spans 327 residues: tRNA dimethylallyltransferase (327 aa).

Residue 14–21 (GPTASGKT) participates in ATP binding. Residue 16–21 (TASGKT) coordinates substrate. Interaction with substrate tRNA stretches follow at residues 39–42 (DSAL) and 163–167 (QRIQR).

Belongs to the IPP transferase family. Monomer. It depends on Mg(2+) as a cofactor.

The enzyme catalyses adenosine(37) in tRNA + dimethylallyl diphosphate = N(6)-dimethylallyladenosine(37) in tRNA + diphosphate. Catalyzes the transfer of a dimethylallyl group onto the adenine at position 37 in tRNAs that read codons beginning with uridine, leading to the formation of N6-(dimethylallyl)adenosine (i(6)A). The protein is tRNA dimethylallyltransferase of Xanthomonas oryzae pv. oryzae (strain KACC10331 / KXO85).